The sequence spans 1006 residues: Probable beta-galactosidase A (1006 aa).

An N-terminal signal peptide occupies residues 1 to 18 (MKLLSVCAVALLAAQAAG). Substrate contacts are provided by Tyr-96, Asn-140, Ala-141, and Glu-142. N-linked (GlcNAc...) asparagine glycosylation is present at Asn-156. Asn-199 is a binding site for substrate. Glu-200 serves as the catalytic Proton donor. Cys-205 and Cys-206 are oxidised to a cystine. Residue Asn-207 is glycosylated (N-linked (GlcNAc...) asparagine). Tyr-260 is a binding site for substrate. A disulfide bridge links Cys-266 with Cys-315. The active-site Nucleophile is Glu-298. Tyr-364 contributes to the substrate binding site. Asn-373, Asn-402, Asn-422, Asn-622, Asn-777, and Asn-914 each carry an N-linked (GlcNAc...) asparagine glycan.

Belongs to the glycosyl hydrolase 35 family.

It localises to the secreted. It carries out the reaction Hydrolysis of terminal non-reducing beta-D-galactose residues in beta-D-galactosides.. Functionally, cleaves beta-linked terminal galactosyl residues from gangliosides, glycoproteins, and glycosaminoglycans. The chain is Probable beta-galactosidase A (lacA) from Neosartorya fischeri (strain ATCC 1020 / DSM 3700 / CBS 544.65 / FGSC A1164 / JCM 1740 / NRRL 181 / WB 181) (Aspergillus fischerianus).